The chain runs to 337 residues: Protein BIG GRAIN 1-like (337 aa).

3 disordered regions span residues 1-32 (MRDM…PSFS), 120-163 (SAAG…RPAS), and 179-235 (KRPS…PSRS). Over residues 137-146 (HEQPDVEKTA) the composition is skewed to basic and acidic residues. Low complexity-rich tracts occupy residues 150–163 (PGSA…RPAS) and 195–209 (PACS…SSYA).

Belongs to the BIG GRAIN 1 (BG1) plant protein family.

The protein resides in the cell membrane. Involved in auxin transport. Regulator of the auxin signaling pathway. This is Protein BIG GRAIN 1-like from Oryza sativa subsp. japonica (Rice).